The primary structure comprises 407 residues: MAYQEPNKDGFYGKFGGRFVPETLMTAVLELEKAYRESQADPSFQEELNQLLRQYVGRETPLYYAKNLTQHIGGAKIYLKREDLNHTGAHKINNALGQVWLAKRMGKKKIIAETGAGQHGVATATAAALFNMECTIHMGEEDVKRQALNVFRMELLGAKVEAVTDGSRVLKDAVNAALRSWVANIDDTHYILGSALGPHPFPEIVRDFQSVIGREAKQQYRDLTGQNLPDALVACVGGGSNAIGLFHPFVEDESVAMYGAEAAGLGVDTEHHAATLTKGRPGVLHGSLMDVLQDAHGQILEAFSISAGLDYPGIGPEHSHYHDIKRASYVPVTDEEALEGFQLLSRVEGIIPALESSHAIAFAVKLAKELGPEKSMIVCLSGRGDKDVVQVKDRLEADAAKKGEAHA.

Lys91 carries the post-translational modification N6-(pyridoxal phosphate)lysine.

Belongs to the TrpB family. Tetramer of two alpha and two beta chains. Pyridoxal 5'-phosphate is required as a cofactor.

The enzyme catalyses (1S,2R)-1-C-(indol-3-yl)glycerol 3-phosphate + L-serine = D-glyceraldehyde 3-phosphate + L-tryptophan + H2O. It participates in amino-acid biosynthesis; L-tryptophan biosynthesis; L-tryptophan from chorismate: step 5/5. Functionally, the beta subunit is responsible for the synthesis of L-tryptophan from indole and L-serine. This chain is Tryptophan synthase beta chain, found in Streptococcus pneumoniae (strain JJA).